The sequence spans 315 residues: MDNLYTKGELLQVHTKNYDVFEGRFYSMAQDKTKISLYDVKEIPHGDANDGVLHYYDSEIREVVKLQESTEKKVLKISQTKYEEILKISKKYIFINQVDKSFHEAVDDLNQQDFIAVSGDGANMGRKCKMPFLVLSTDHQIYIFDIQVMQYHAFESGLKKILEGDSPKKIAHDCRKLSDCLYHKHNVKLKSVFDTQVGDLIITKNKKVTLPNKVKSLGECLTNYLGLQQNTIDEKLDIVQSTERPLSVKIKDSLARNIAFLHHLSEVINEEMQLPFYRGVECYIENIRSSDDFKAWELCGKLNQIPKEFRNAIDY.

In terms of domain architecture, 3'-5' exonuclease spans 141 to 228 (IYIFDIQVMQ…ECLTNYLGLQ (88 aa)).

This sequence belongs to the EXD1 family. Homodimer. Component of the PET complex, at least composed of EXD1, SIWI, TDRD12 and piRNAs.

It localises to the cytoplasm. Functionally, RNA-binding component of the PET complex, a multiprotein complex required for the processing of piRNAs during spermatogenesis. The piRNA metabolic process mediates the repression of transposable elements during meiosis by forming complexes composed of piRNAs and Piwi proteins and governs the methylation and subsequent repression of transposable elements, preventing their mobilization, which is essential for the germline integrity. The PET complex is required during the secondary piRNAs metabolic process for the PIWIL2 slicing-triggered loading of PIWIL4 piRNAs. In the PET complex, EXD1 probably acts as an RNA adapter. EXD1 is an inactive exonuclease. This Bombyx mori (Silk moth) protein is piRNA biogenesis protein EXD1.